The primary structure comprises 162 residues: ATP synthase subunit delta, mitochondrial (162 aa).

Residues 1–24 (MFSVARTAIRGAARPAVRIARRGY) constitute a mitochondrion transit peptide.

As to quaternary structure, F-type ATP synthases have 2 components, the catalytic core F(1) and the membrane-embedded component F(0), linked together by a central stalk and a peripheral stalk. The central stalk, also called rotor shaft, is often seen as part of F(1). The peripheral stalk is seen as part of F(0). F(0) contains the membrane channel next to the rotor. F-type ATP synthases form dimers but each monomer functions independently in ATP generation. The dimer consists of 17 different polypeptides: ATP1 (subunit alpha, 3 molecules per monomer, part of F(1)), ATP2 (subunit beta, 3 copies per monomer, part of F(1)), ATP3 (subunit gamma, part of the central stalk), ATP4 (subunit b, part of the peripheral stalk), ATP5/OSCP (subunit 5/OSCP, part of the peripheral stalk), ATP6 (subunit a, part of the peripheral stalk), ATP7 (subunit d, part of the peripheral stalk), ATP8 (subunit 8, part of the peripheral stalk), OLI1 (subunit c, part of the rotor, 10 molecules per monomer), ATP14 (subunit h, part of the peripheral stalk), ATP15 (subunit epsilon, part of the central stalk), ATP16 (subunit delta, part of the central stalk), ATP17 (subunit f, part of the peripheral stalk), ATP18 (subunit i/j, part of the peripheral stalk), ATP19 (subunit k, dimer-specific, at interface between monomers), ATP20 (subunit g, at interface between monomers), TIM11 (subunit e, at interface between monomers).

It is found in the mitochondrion inner membrane. Mitochondrial membrane ATP synthase (F(1)F(0) ATP synthase or Complex V) produces ATP from ADP in the presence of a proton gradient across the membrane which is generated by electron transport complexes of the respiratory chain. F-type ATP synthases consist of two structural domains, F(1) - containing the extramembraneous catalytic core, and F(0) - containing the membrane proton channel, linked together by a central stalk and a peripheral stalk. During catalysis, ATP synthesis in the catalytic domain of F(1) is coupled via a rotary mechanism of the central stalk subunits to proton translocation. Part of the complex F(1) domain and the central stalk which is part of the complex rotary element. Rotation of the central stalk against the surrounding alpha/ATP1(3)beta/ATP2(3) subunits leads to hydrolysis of ATP in three separate catalytic sites on the beta/ATP2 subunits. The sequence is that of ATP synthase subunit delta, mitochondrial from Yarrowia lipolytica (strain CLIB 122 / E 150) (Yeast).